Reading from the N-terminus, the 556-residue chain is TNF receptor-associated factor 6-A (556 aa).

Residues 72 to 111 (CPICLMALREAVQTPCGHRFCKACILKSLRNAGHKCPVDN) form an RING-type; degenerate zinc finger. TRAF-type zinc fingers lie at residues 148–204 (RHLE…EDKS) and 205–261 (GHEL…HNLA). The region spanning 384 to 533 (NGVFIWRIKG…NDTLLVRCSV (150 aa)) is the MATH domain.

The protein belongs to the TNF receptor-associated factor family. A subfamily. Homotrimer. Homooligomer. Interacts with tifa. Highly expressed in ovary and moderately expressed in kidney, spleen, stomach, colon and testis.

The protein resides in the cytoplasm. Its subcellular location is the cell cortex. It localises to the nucleus. The protein localises to the lipid droplet. The catalysed reaction is S-ubiquitinyl-[E2 ubiquitin-conjugating enzyme]-L-cysteine + [acceptor protein]-L-lysine = [E2 ubiquitin-conjugating enzyme]-L-cysteine + N(6)-ubiquitinyl-[acceptor protein]-L-lysine.. Its pathway is protein modification; protein ubiquitination. E3 ubiquitin ligase that, together with UBE2N and UBE2V1, mediates the synthesis of 'Lys-63'-linked-polyubiquitin chains conjugated to proteins, such as IKBKG, IRAK1, AKT1 and AKT2. Also mediates ubiquitination of free/unanchored polyubiquitin chain that leads to MAP3K7 activation. The sequence is that of TNF receptor-associated factor 6-A (traf6-a) from Xenopus laevis (African clawed frog).